The primary structure comprises 335 residues: Dihydroorotate dehydrogenase (quinone) (335 aa).

Residues 58 to 62 (AGADK) and Thr82 contribute to the FMN site. Position 62 (Lys62) interacts with substrate. Residue 107–111 (NRNGF) coordinates substrate. FMN contacts are provided by Asn135 and Asn168. Position 168 (Asn168) interacts with substrate. Ser171 (nucleophile) is an active-site residue. Asn173 is a substrate binding site. FMN is bound by residues Lys213 and Gly241. 242 to 243 (NT) provides a ligand contact to substrate. FMN-binding positions include Gly264, Gly293, and 314–315 (YS).

The protein belongs to the dihydroorotate dehydrogenase family. Type 2 subfamily. As to quaternary structure, monomer. FMN is required as a cofactor.

The protein resides in the cell membrane. It catalyses the reaction (S)-dihydroorotate + a quinone = orotate + a quinol. It participates in pyrimidine metabolism; UMP biosynthesis via de novo pathway; orotate from (S)-dihydroorotate (quinone route): step 1/1. Functionally, catalyzes the conversion of dihydroorotate to orotate with quinone as electron acceptor. In Actinobacillus pleuropneumoniae serotype 7 (strain AP76), this protein is Dihydroorotate dehydrogenase (quinone).